A 104-amino-acid chain; its full sequence is uncharacterized protein (104 aa).

Residues M1 to A25 form the signal peptide. A helical membrane pass occupies residues I79 to L99.

Its subcellular location is the membrane. This is an uncharacterized protein from Saccharomyces cerevisiae (strain ATCC 204508 / S288c) (Baker's yeast).